We begin with the raw amino-acid sequence, 499 residues long: BTB/POZ domain-containing protein At5g60050 (499 aa).

Positions 18–30 (PSLSFSPSRISSP) are enriched in low complexity. Residues 18–57 (PSLSFSPSRISSPIKLSTASPPLPPPPPPPPNESTLSNPT) form a disordered region. Positions 38–49 (PPLPPPPPPPPN) are enriched in pro residues. One can recognise a BTB domain in the interval 99–172 (GDVKLTVVGK…MYSDDLKKKL (74 aa)).

The protein operates within protein modification; protein ubiquitination. May act as a substrate-specific adapter of an E3 ubiquitin-protein ligase complex (CUL3-RBX1-BTB) which mediates the ubiquitination and subsequent proteasomal degradation of target proteins. The chain is BTB/POZ domain-containing protein At5g60050 from Arabidopsis thaliana (Mouse-ear cress).